Consider the following 363-residue polypeptide: Zinc phosphodiesterase ELAC protein 1 (363 aa).

Zn(2+) is bound by residues His-62, His-64, Asp-66, His-67, His-182, Asp-253, and His-313. Asp-66 functions as the Proton acceptor in the catalytic mechanism.

The protein belongs to the RNase Z family. In terms of assembly, homodimer. Requires Zn(2+) as cofactor.

The protein localises to the cytoplasm. It localises to the cytosol. It is found in the nucleus. It catalyses the reaction Endonucleolytic cleavage of RNA, removing extra 3' nucleotides from tRNA precursor, generating 3' termini of tRNAs. A 3'-hydroxy group is left at the tRNA terminus and a 5'-phosphoryl group is left at the trailer molecule.. Functionally, zinc phosphodiesterase, which displays some tRNA 3'-processing endonuclease activity. Specifically involved in tRNA repair: acts downstream of the ribosome-associated quality control (RQC) pathway by removing a 2',3'-cyclic phosphate from tRNAs following cleavage by ANKZF1. tRNAs are then processed by TRNT1. This is Zinc phosphodiesterase ELAC protein 1 (ELAC1) from Bos taurus (Bovine).